The following is a 124-amino-acid chain: Small ribosomal subunit protein uS12 (124 aa).

Position 89 is a 3-methylthioaspartic acid (Asp89). The interval 102–124 is disordered; the sequence is LDTSGVNNRKHGRSKYGTKRPKS. Positions 109–124 are enriched in basic residues; the sequence is NRKHGRSKYGTKRPKS.

It belongs to the universal ribosomal protein uS12 family. As to quaternary structure, part of the 30S ribosomal subunit. Contacts proteins S8 and S17. May interact with IF1 in the 30S initiation complex.

With S4 and S5 plays an important role in translational accuracy. In terms of biological role, interacts with and stabilizes bases of the 16S rRNA that are involved in tRNA selection in the A site and with the mRNA backbone. Located at the interface of the 30S and 50S subunits, it traverses the body of the 30S subunit contacting proteins on the other side and probably holding the rRNA structure together. The combined cluster of proteins S8, S12 and S17 appears to hold together the shoulder and platform of the 30S subunit. The sequence is that of Small ribosomal subunit protein uS12 from Francisella philomiragia subsp. philomiragia (strain ATCC 25017 / CCUG 19701 / FSC 153 / O#319-036).